The sequence spans 743 residues: Amylovoran biosynthesis protein AmsF (743 aa).

An N-terminal signal peptide occupies residues 1–27; the sequence is MKRRELIRTAFSTIVATAALSSVSARA.

This sequence to R.meliloti ExoP.

It localises to the periplasm. It functions in the pathway glycan metabolism; exopolysaccharide biosynthesis. Its function is as follows. Involved in the biosynthesis of amylovoran which functions as a virulence factor. May be involved in the polymerization or late modification of the repeating units. The protein is Amylovoran biosynthesis protein AmsF (amsF) of Erwinia amylovora (Fire blight bacteria).